The following is a 255-amino-acid chain: 1-(5-phosphoribosyl)-5-[(5-phosphoribosylamino)methylideneamino] imidazole-4-carboxamide isomerase (255 aa).

The Proton acceptor role is filled by Asp-8. The Proton donor role is filled by Asp-129.

The protein belongs to the HisA/HisF family.

It is found in the cytoplasm. The catalysed reaction is 1-(5-phospho-beta-D-ribosyl)-5-[(5-phospho-beta-D-ribosylamino)methylideneamino]imidazole-4-carboxamide = 5-[(5-phospho-1-deoxy-D-ribulos-1-ylimino)methylamino]-1-(5-phospho-beta-D-ribosyl)imidazole-4-carboxamide. Its pathway is amino-acid biosynthesis; L-histidine biosynthesis; L-histidine from 5-phospho-alpha-D-ribose 1-diphosphate: step 4/9. The protein is 1-(5-phosphoribosyl)-5-[(5-phosphoribosylamino)methylideneamino] imidazole-4-carboxamide isomerase of Prochlorococcus marinus (strain MIT 9301).